A 336-amino-acid chain; its full sequence is Histidinol-phosphate aminotransferase (336 aa).

At K204 the chain carries N6-(pyridoxal phosphate)lysine.

It belongs to the class-II pyridoxal-phosphate-dependent aminotransferase family. Histidinol-phosphate aminotransferase subfamily. Requires pyridoxal 5'-phosphate as cofactor.

The enzyme catalyses L-histidinol phosphate + 2-oxoglutarate = 3-(imidazol-4-yl)-2-oxopropyl phosphate + L-glutamate. It functions in the pathway amino-acid biosynthesis; L-histidine biosynthesis; L-histidine from 5-phospho-alpha-D-ribose 1-diphosphate: step 7/9. This is Histidinol-phosphate aminotransferase from Thermococcus kodakarensis (strain ATCC BAA-918 / JCM 12380 / KOD1) (Pyrococcus kodakaraensis (strain KOD1)).